The following is a 394-amino-acid chain: Probable peptidoglycan glycosyltransferase FtsW (394 aa).

Over M1 to W26 the chain is Cytoplasmic. The helical transmembrane segment at L27 to V47 threads the bilayer. Residues M48–P57 are Periplasmic-facing. A helical membrane pass occupies residues F58–V78. Topologically, residues V79–K88 are cytoplasmic. A helical membrane pass occupies residues I89–I109. The Periplasmic segment spans residues G110–R118. A helical membrane pass occupies residues W119–F139. Over Y140–E154 the chain is Cytoplasmic. A helical transmembrane segment spans residues S155–L175. At E176–P177 the chain is on the periplasmic side. The helical transmembrane segment at D178 to V198 threads the bilayer. The Cytoplasmic portion of the chain corresponds to K199–R201. Residues Y202 to P222 form a helical membrane-spanning segment. At Y223 to D278 the chain is on the periplasmic side. The chain crosses the membrane as a helical span at residues F279–L299. Residues Y300–Y327 are Cytoplasmic-facing. The chain crosses the membrane as a helical span at residues G328–L348. Topologically, residues P349 to T354 are periplasmic. A helical membrane pass occupies residues L355 to L375. Residues L376–A394 lie on the Cytoplasmic side of the membrane.

The protein belongs to the SEDS family. FtsW subfamily.

It is found in the cell inner membrane. The catalysed reaction is [GlcNAc-(1-&gt;4)-Mur2Ac(oyl-L-Ala-gamma-D-Glu-L-Lys-D-Ala-D-Ala)](n)-di-trans,octa-cis-undecaprenyl diphosphate + beta-D-GlcNAc-(1-&gt;4)-Mur2Ac(oyl-L-Ala-gamma-D-Glu-L-Lys-D-Ala-D-Ala)-di-trans,octa-cis-undecaprenyl diphosphate = [GlcNAc-(1-&gt;4)-Mur2Ac(oyl-L-Ala-gamma-D-Glu-L-Lys-D-Ala-D-Ala)](n+1)-di-trans,octa-cis-undecaprenyl diphosphate + di-trans,octa-cis-undecaprenyl diphosphate + H(+). Its pathway is cell wall biogenesis; peptidoglycan biosynthesis. Peptidoglycan polymerase that is essential for cell division. In Legionella pneumophila subsp. pneumophila (strain Philadelphia 1 / ATCC 33152 / DSM 7513), this protein is Probable peptidoglycan glycosyltransferase FtsW.